We begin with the raw amino-acid sequence, 159 residues long: Disulfide bond formation protein B (159 aa).

Topologically, residues 1–8 are cytoplasmic; the sequence is MQANSRAF. A helical membrane pass occupies residues 9 to 25; that stretch reads FLLIAVIAFGLVGYALY. Residues 26–43 lie on the Periplasmic side of the membrane; that stretch reads LQHVEGLQPCPLCVLQRF. Cys-35 and Cys-38 are oxidised to a cystine. Residues 44–57 traverse the membrane as a helical segment; the sequence is AFVGIGVFSLLAAL. Over 58–63 the chain is Cytoplasmic; that stretch reads SSATRL. Residues 64-81 form a helical membrane-spanning segment; the sequence is LWHGLGMLSGLGGIFVAG. The Periplasmic segment spans residues 82-136; it reads YHVSLLLNPKASCGIDPIENWVNALPTAKWLPQVFESDGLCTAPLPPVLGVSIPL. Cys-94 and Cys-122 are joined by a disulfide. Residues 137 to 155 traverse the membrane as a helical segment; that stretch reads WSLIWMVILALTLVVAMIR. The Cytoplasmic portion of the chain corresponds to 156-159; the sequence is RERR.

It belongs to the DsbB family.

The protein localises to the cell inner membrane. Required for disulfide bond formation in some periplasmic proteins. Acts by oxidizing the DsbA protein. The sequence is that of Disulfide bond formation protein B from Ralstonia nicotianae (strain ATCC BAA-1114 / GMI1000) (Ralstonia solanacearum).